A 152-amino-acid chain; its full sequence is MASERTFIAIKPDGVQRGLIGEILGRFERKGFKLVGLKQLTPSRELAEQHYGVHKERPFFAGLVDFITSGPVVAMVWEGDGVIASARKLIGATKPLEAEPGTIRGDLAINIGRNVIHGSDAPETAQFEIGLWFQASELSDWTPSDQGWRTEG.

Positions 11, 59, 87, 93, 104, and 114 each coordinate ATP. His-117 serves as the catalytic Pros-phosphohistidine intermediate.

Belongs to the NDK family. As to quaternary structure, homotetramer. Mg(2+) is required as a cofactor.

Its subcellular location is the cytoplasm. The enzyme catalyses dZDP + ATP = dZTP + ADP. It catalyses the reaction a 2'-deoxyribonucleoside 5'-diphosphate + ATP = a 2'-deoxyribonucleoside 5'-triphosphate + ADP. It carries out the reaction a ribonucleoside 5'-diphosphate + ATP = a ribonucleoside 5'-triphosphate + ADP. Its pathway is purine metabolism. Functionally, major role in the synthesis of nucleoside triphosphates other than ATP. The ATP gamma phosphate is transferred to the NDP beta phosphate via a ping-pong mechanism, using a phosphorylated active-site intermediate. In terms of biological role, (Microbial infection) Catalyzes the phosphorylation of dZDP to dZTP, when the bacterium is infected by a phage that produces the substrate for the synthesis of dZTP (2- amino-2'-deoxyadenosine 5'-triphosphate), which is then used by the phage as a DNA polymerase substrate. The polypeptide is Nucleoside diphosphate kinase (Synechococcus sp. (strain WH7803)).